Here is a 471-residue protein sequence, read N- to C-terminus: Glutamate--tRNA ligase 1 (471 aa).

The 'HIGH' region motif lies at 10 to 20 (PSPTGFLHIGG). Residues 113–140 (ARKEGRPPRYDGRWRDRDPSEAPKDRDP) are disordered. The short motif at 239 to 243 (KLSKR) is the 'KMSKS' region element. Residue Lys-242 coordinates ATP.

It belongs to the class-I aminoacyl-tRNA synthetase family. Glutamate--tRNA ligase type 1 subfamily. As to quaternary structure, monomer.

The protein localises to the cytoplasm. The enzyme catalyses tRNA(Glu) + L-glutamate + ATP = L-glutamyl-tRNA(Glu) + AMP + diphosphate. Catalyzes the attachment of glutamate to tRNA(Glu) in a two-step reaction: glutamate is first activated by ATP to form Glu-AMP and then transferred to the acceptor end of tRNA(Glu). This chain is Glutamate--tRNA ligase 1, found in Xanthobacter autotrophicus (strain ATCC BAA-1158 / Py2).